A 199-amino-acid chain; its full sequence is MRILGLTGSIGMGKSTTARLFAEAGVPVYDADATVHQIYEGEAAPAVETAFPGTTVNGKVDRALLSARVLHDAAAMQRLEAIVHPMLRAHHQQFLADAEKSGAPVAVVDVPLLYETGGDARVDAVVVVTTSHQVQRARILARQGMTDEKLDALLARQLPDAEKRQRADFVVDTSNGLEPVRAQIREILAATAKMPQRRA.

Positions 3–199 constitute a DPCK domain; the sequence is ILGLTGSIGM…ATAKMPQRRA (197 aa). 11-16 lines the ATP pocket; that stretch reads GMGKST.

The protein belongs to the CoaE family.

It is found in the cytoplasm. It carries out the reaction 3'-dephospho-CoA + ATP = ADP + CoA + H(+). The protein operates within cofactor biosynthesis; coenzyme A biosynthesis; CoA from (R)-pantothenate: step 5/5. Catalyzes the phosphorylation of the 3'-hydroxyl group of dephosphocoenzyme A to form coenzyme A. This chain is Dephospho-CoA kinase, found in Rhodopseudomonas palustris (strain BisB18).